The following is a 160-amino-acid chain: Ureidoglycolate lyase (160 aa).

It belongs to the ureidoglycolate lyase family. Homodimer. The cofactor is Ni(2+).

It carries out the reaction (S)-ureidoglycolate = urea + glyoxylate. It functions in the pathway nitrogen metabolism; (S)-allantoin degradation. Its function is as follows. Catalyzes the catabolism of the allantoin degradation intermediate (S)-ureidoglycolate, generating urea and glyoxylate. Involved in the anaerobic utilization of allantoin as sole nitrogen source. Reinforces the induction of genes involved in the degradation of allantoin and glyoxylate by producing glyoxylate. In Escherichia coli O127:H6 (strain E2348/69 / EPEC), this protein is Ureidoglycolate lyase.